Here is a 504-residue protein sequence, read N- to C-terminus: ATP synthase subunit alpha (504 aa).

Residue 170–177 (GDRQTGKT) participates in ATP binding.

Belongs to the ATPase alpha/beta chains family. As to quaternary structure, F-type ATPases have 2 components, CF(1) - the catalytic core - and CF(0) - the membrane proton channel. CF(1) has five subunits: alpha(3), beta(3), gamma(1), delta(1), epsilon(1). CF(0) has four main subunits: a, b, b' and c.

The protein resides in the cellular thylakoid membrane. It catalyses the reaction ATP + H2O + 4 H(+)(in) = ADP + phosphate + 5 H(+)(out). Functionally, produces ATP from ADP in the presence of a proton gradient across the membrane. The alpha chain is a regulatory subunit. The polypeptide is ATP synthase subunit alpha (Prochlorococcus marinus (strain MIT 9211)).